The following is a 289-amino-acid chain: Oxaloacetate decarboxylase (289 aa).

Residue Ser-47 coordinates substrate. Asp-85 provides a ligand contact to Mg(2+). Substrate-binding residues include Arg-156 and His-232.

The protein belongs to the isocitrate lyase/PEP mutase superfamily. Oxaloacetate decarboxylase family. In terms of assembly, homotetramer; dimer of dimers. Mg(2+) is required as a cofactor.

The catalysed reaction is oxaloacetate + H(+) = pyruvate + CO2. Functionally, catalyzes the decarboxylation of oxaloacetate into pyruvate. Seems to play a role in maintaining cellular concentrations of bicarbonate and pyruvate. In Rhodopseudomonas palustris (strain BisA53), this protein is Oxaloacetate decarboxylase.